We begin with the raw amino-acid sequence, 699 residues long: D-(-)-3-hydroxybutyrate oligomer hydrolase (699 aa).

Positions Met1–Ala33 are cleaved as a signal peptide. Ser311 (charge relay system) is an active-site residue.

It belongs to the D-(-)-3-hydroxybutyrate oligomer hydrolase family.

Its subcellular location is the secreted. It catalyses the reaction (3R)-hydroxybutanoate dimer + H2O = 2 (R)-3-hydroxybutanoate + H(+). The protein operates within lipid metabolism; butanoate metabolism. Its function is as follows. Participates in the degradation of poly-3-hydroxybutyrate (PHB). It works downstream of poly(3-hydroxybutyrate) depolymerase, hydrolyzing D(-)-3-hydroxybutyrate oligomers of various length (3HB-oligomers) into 3HB-monomers. This Burkholderia mallei (strain NCTC 10247) protein is D-(-)-3-hydroxybutyrate oligomer hydrolase.